A 416-amino-acid polypeptide reads, in one-letter code: Vacuole membrane protein KMS2 (416 aa).

At Gly2 the chain carries N-acetylglycine. The Cytoplasmic portion of the chain corresponds to 2 to 59 (GYGNRASSKTPAISGLREKHQQDLEKLTLTSQPFKTLRLFVVAVFLYVRRWSSYLLAN). The helical transmembrane segment at 60–80 (VGWLILFCSIFVAFAALLVTL) threads the bilayer. The Lumenal segment spans residues 81 to 100 (DGPHVKHVEELSEYTRFGLW). A helical membrane pass occupies residues 101–123 (WIFLGVASSIGLGSGLHTFVLYL). The Cytoplasmic segment spans residues 124–249 (GPHIALFTIK…WLLSHSQYLN (126 aa)). The chain crosses the membrane as a helical span at residues 250 to 270 (FFTILILASVPNPLFDLAGIM). Over 271 to 281 (CGQFEKPFWEF) the chain is Lumenal. Residues 282-304 (FLATLIGKAIIKTHIQTVFIICV) traverse the membrane as a helical segment. Topologically, residues 305-315 (CNNQLLDWVEN) are cytoplasmic. A helical transmembrane segment spans residues 316 to 336 (ELIYILSFVPGFASALPELTA). Residues 337–364 (KLRLMKEKYLIASPPVSSDINVKKWDLS) are Lumenal-facing. Residues 365–385 (FASVWNGVVWLMLLNFFGQIV) form a helical membrane-spanning segment. At 386-416 (TSTAQRYLKKQQEEELDALTNKSSLTSKKSK) the chain is on the cytoplasmic side.

The protein belongs to the VMP1 family.

The protein localises to the endoplasmic reticulum membrane. In terms of biological role, involved in the early secretory pathway. Required for the correct export of secretory products from the endoplasmic reticulum (ER) and involved in the maintenance of ER integrity. The protein is Vacuole membrane protein KMS2 of Arabidopsis thaliana (Mouse-ear cress).